The primary structure comprises 245 residues: MTIRILAEGLAFRYGSKGPNIIHDVSFSVYDGDFIGIIGPNGGGKSTLTMLILGLLTPTFGSLKTFPSHSAGKQTHSMIGWVPQHFSYDPCFPISVKDVVLSGRLSQLSWHGKYKKKDFEAVDHALDLVGLSDHHHHCFAHLSGGQIQRVLLARALASYPEILILDEPTTNIDPDNQQRILSILKKLNRTCTILMVTHDLHHTTNYFNKVFYMNKTLTSLADTSTLTDQFCCHPYKNQEFSCSPH.

The 236-residue stretch at Ile5–Phe240 folds into the ABC transporter domain. Gly39 to Ser46 serves as a coordination point for ATP.

Belongs to the ABC transporter superfamily.

It is found in the cell inner membrane. Its function is as follows. Part of an ATP-driven transport system CPn0541/CPn0542/CPn0543 for a metal. Probably responsible for energy coupling to the transport system. The protein is Probable metal transport system ATP-binding protein CPn_0542/CP_0210/CPj0542/CpB0563 of Chlamydia pneumoniae (Chlamydophila pneumoniae).